Consider the following 368-residue polypeptide: Single-stranded DNA-binding protein 3 (368 aa).

Positions 16–48 constitute a LisH domain; the sequence is AREKLALYVYEYLLHVGAQKSAQTFLSEIRWEK. Residues 100–368 form a disordered region; that stretch reads PVLGNIPPND…NYSPSMTMSV (269 aa). The segment covering 126–139 has biased composition (pro residues); that stretch reads GSQPSPHAQPPPHN. Low complexity-rich tracts occupy residues 174–189, 211–220, and 230–248; these read PNMG…PRGM, GPGMPGINMG, and PSSA…TYVG. Residues 252-262 show a composition bias toward pro residues; it reads GGGPPGTPIMP. Over residues 265–276 the composition is skewed to polar residues; that stretch reads ADSTNSSDNIYT. Over residues 295–305 the composition is skewed to gly residues; the sequence is GSDGPMGGMGG. Over residues 326–337 the composition is skewed to low complexity; that stretch reads NSPNNISGISNP. Over residues 353–368 the composition is skewed to polar residues; that stretch reads HSFQNDNYSPSMTMSV.

As to expression, expressed in embryonic fibroblasts and chondrocytes.

It is found in the nucleus. In terms of biological role, may be involved in transcription regulation of the alpha 2(I) collagen gene where it binds to the single-stranded polypyrimidine sequences in the promoter region. The chain is Single-stranded DNA-binding protein 3 (SSBP3) from Gallus gallus (Chicken).